Here is a 466-residue protein sequence, read N- to C-terminus: Cysteine--tRNA ligase (466 aa).

Zn(2+) is bound at residue C28. Residues 30-40 (PTVYNYIHIGN) carry the 'HIGH' region motif. Zn(2+) is bound by residues C208, H233, and E237. Residues 265–269 (KMSKS) carry the 'KMSKS' region motif. Residue K268 coordinates ATP.

This sequence belongs to the class-I aminoacyl-tRNA synthetase family. In terms of assembly, monomer. Zn(2+) serves as cofactor.

It localises to the cytoplasm. The enzyme catalyses tRNA(Cys) + L-cysteine + ATP = L-cysteinyl-tRNA(Cys) + AMP + diphosphate. The chain is Cysteine--tRNA ligase from Staphylococcus saprophyticus subsp. saprophyticus (strain ATCC 15305 / DSM 20229 / NCIMB 8711 / NCTC 7292 / S-41).